A 57-amino-acid chain; its full sequence is Large ribosomal subunit protein bL32 (57 aa).

Residues Met-1–Gln-19 show a composition bias toward basic residues. Positions Met-1–Trp-20 are disordered.

This sequence belongs to the bacterial ribosomal protein bL32 family.

The protein is Large ribosomal subunit protein bL32 of Mycobacterium leprae (strain Br4923).